A 192-amino-acid polypeptide reads, in one-letter code: Ribose 1,5-bisphosphate phosphokinase PhnN (192 aa).

Belongs to the ribose 1,5-bisphosphokinase family.

It catalyses the reaction alpha-D-ribose 1,5-bisphosphate + ATP = 5-phospho-alpha-D-ribose 1-diphosphate + ADP. It functions in the pathway metabolic intermediate biosynthesis; 5-phospho-alpha-D-ribose 1-diphosphate biosynthesis; 5-phospho-alpha-D-ribose 1-diphosphate from D-ribose 5-phosphate (route II): step 3/3. Functionally, catalyzes the phosphorylation of ribose 1,5-bisphosphate to 5-phospho-D-ribosyl alpha-1-diphosphate (PRPP). In Achromobacter xylosoxidans (strain A8), this protein is Ribose 1,5-bisphosphate phosphokinase PhnN.